Consider the following 679-residue polypeptide: Protein hook (679 aa).

The 118-residue stretch at 6–123 (NEMYYSLLEW…RLLQLVLGCA (118 aa)) folds into the Calponin-homology (CH) domain. Coiled coils occupy residues 135–437 (EIMC…LKCG) and 480–574 (QTAL…QEIL).

It belongs to the hook family. As to quaternary structure, homodimer. Interacts with microtubules via its N-terminus.

The protein localises to the cytoplasm. It is found in the cytoskeleton. It localises to the endosome. The protein resides in the synapse. In terms of biological role, involved in endocytic trafficking by stabilizing organelles of the endocytic pathway. Probably acts as a cytoskeletal linker protein required to tether endosome vesicles to the cytoskeleton. Involved in modulation of endocytosis at stages required for down-regulation of membrane proteins that control synapse size. Not involved in synaptic vesicle recycling. Required in R7 cells for boss endocytosis into multivesicular bodies (MVBs). Has a role in regulating adult longevity. This is Protein hook from Drosophila erecta (Fruit fly).